The following is a 349-amino-acid chain: tRNA N6-adenosine threonylcarbamoyltransferase (349 aa).

Fe cation-binding residues include His-117 and His-121. Residues 139–143 (QVSGG), Asp-172, Gly-185, Asp-189, and Asn-278 each bind substrate. A Fe cation-binding site is contributed by Asp-310.

The protein belongs to the KAE1 / TsaD family. Fe(2+) serves as cofactor.

Its subcellular location is the cytoplasm. It catalyses the reaction L-threonylcarbamoyladenylate + adenosine(37) in tRNA = N(6)-L-threonylcarbamoyladenosine(37) in tRNA + AMP + H(+). Functionally, required for the formation of a threonylcarbamoyl group on adenosine at position 37 (t(6)A37) in tRNAs that read codons beginning with adenine. Is involved in the transfer of the threonylcarbamoyl moiety of threonylcarbamoyl-AMP (TC-AMP) to the N6 group of A37, together with TsaE and TsaB. TsaD likely plays a direct catalytic role in this reaction. This Lactobacillus acidophilus (strain ATCC 700396 / NCK56 / N2 / NCFM) protein is tRNA N6-adenosine threonylcarbamoyltransferase.